The chain runs to 208 residues: Large ribosomal subunit protein uL4 (208 aa).

Positions 45 to 96 are disordered; sequence RQGTHKSKTRAEVRGGGRKPYRQKGTGNARQGSTRSPLMVGGGTIFGPTPHG. Over residues 69–80 the composition is skewed to polar residues; it reads GTGNARQGSTRS.

Belongs to the universal ribosomal protein uL4 family. Part of the 50S ribosomal subunit.

Its function is as follows. One of the primary rRNA binding proteins, this protein initially binds near the 5'-end of the 23S rRNA. It is important during the early stages of 50S assembly. It makes multiple contacts with different domains of the 23S rRNA in the assembled 50S subunit and ribosome. Functionally, forms part of the polypeptide exit tunnel. This is Large ribosomal subunit protein uL4 from Chlorobium phaeovibrioides (strain DSM 265 / 1930) (Prosthecochloris vibrioformis (strain DSM 265)).